We begin with the raw amino-acid sequence, 360 residues long: G-protein coupled receptor 15 (360 aa).

Residues Met-1–Ser-33 are Extracellular-facing. The helical transmembrane segment at Val-34–Leu-54 threads the bilayer. At Met-55 to Asp-69 the chain is on the cytoplasmic side. Residues Ile-70–Val-90 traverse the membrane as a helical segment. At Asp-91–Ser-120 the chain is on the extracellular side. Residues Val-121–Ser-141 traverse the membrane as a helical segment. At Arg-142–Cys-149 the chain is on the cytoplasmic side. Residues Ala-150–Leu-170 form a helical membrane-spanning segment. At Ser-171–Lys-192 the chain is on the extracellular side. Residues Leu-193–Thr-213 traverse the membrane as a helical segment. At Cys-214 to Ser-239 the chain is on the cytoplasmic side. Residues Ile-240 to Ser-260 form a helical membrane-spanning segment. Over Lys-261–Met-284 the chain is Extracellular. A helical membrane pass occupies residues Glu-285 to Phe-305. The Cytoplasmic segment spans residues Asp-306–Leu-360. Ser-359 bears the Phosphoserine mark.

The protein belongs to the G-protein coupled receptor 1 family. In terms of assembly, interacts with adapter YWHAE; this interaction promotes ER-to-Golgi transport of GPR15. In terms of processing, phosphorylation is necessary for YWHAE binding and efficient surface expression. O-glycosylated. Sialylated O-glycans in the N-terminal tail inhibits binding of GPR15LG. Post-translationally, sulfation is required for efficient binding of GPR15LG.

Its subcellular location is the cell membrane. G protein-coupled receptor that plays an important role in immune homeostasis. Acts via its natural ligand GPR15LG, a chemokine-like polypeptide strongly expressed in gastrointestinal tissues. GPR15-GPR15LG signaling axis regulates intestinal homeostasis and inflammation through the migration of immune cells. Controls thereby the specific homing of T-cells, particularly FOXP3+ regulatory T-cells (Tregs), to the large intestine lamina propria. Also required for skin localization of thymus-derived dendritic epidermal T-cells. Plays an important role in mediating cytoprotective function as well as angiogenesis of thrombomodulin. Mechanistically, preferentially signals through the Gi/o pathway to inhibit adenylate cyclase activity and activate a phosphatidylinositol-calcium second messenger system that regulates the release of Ca(2+) ions from intracellular stores. This chain is G-protein coupled receptor 15 (GPR15), found in Macaca nemestrina (Pig-tailed macaque).